Consider the following 110-residue polypeptide: uncharacterized protein (110 aa).

The next 2 membrane-spanning stretches (helical) occupy residues 21–41 (IQLA…PQIC) and 63–83 (PSMI…IIVV).

The protein resides in the membrane. This is an uncharacterized protein from Saccharomyces cerevisiae (strain ATCC 204508 / S288c) (Baker's yeast).